A 356-amino-acid polypeptide reads, in one-letter code: Histidinol-phosphate aminotransferase 1 (356 aa).

K217 is subject to N6-(pyridoxal phosphate)lysine.

Belongs to the class-II pyridoxal-phosphate-dependent aminotransferase family. Histidinol-phosphate aminotransferase subfamily. Homodimer. It depends on pyridoxal 5'-phosphate as a cofactor.

It carries out the reaction L-histidinol phosphate + 2-oxoglutarate = 3-(imidazol-4-yl)-2-oxopropyl phosphate + L-glutamate. Its pathway is amino-acid biosynthesis; L-histidine biosynthesis; L-histidine from 5-phospho-alpha-D-ribose 1-diphosphate: step 7/9. This chain is Histidinol-phosphate aminotransferase 1, found in Burkholderia mallei (strain ATCC 23344).